Consider the following 295-residue polypeptide: Acetaldehyde dehydrogenase (295 aa).

11–14 (SGNI) lines the NAD(+) pocket. The active-site Acyl-thioester intermediate is the Cys-127. NAD(+)-binding positions include 158-166 (SAGPGTRAN) and Asn-270.

This sequence belongs to the acetaldehyde dehydrogenase family.

The catalysed reaction is acetaldehyde + NAD(+) + CoA = acetyl-CoA + NADH + H(+). In Geobacillus thermodenitrificans (strain NG80-2), this protein is Acetaldehyde dehydrogenase (nbaJ).